We begin with the raw amino-acid sequence, 539 residues long: O-phosphoserine--tRNA(Cys) ligase (539 aa).

Substrate is bound by residues 188–190 (HMT), 233–235 (SAS), 275–276 (YY), and Asn327.

Belongs to the class-II aminoacyl-tRNA synthetase family. O-phosphoseryl-tRNA(Cys) synthetase subfamily. Homotetramer. Interacts with SepCysS.

It catalyses the reaction tRNA(Cys) + O-phospho-L-serine + ATP = O-phospho-L-seryl-tRNA(Cys) + AMP + diphosphate. In terms of biological role, catalyzes the attachment of O-phosphoserine (Sep) to tRNA(Cys). The chain is O-phosphoserine--tRNA(Cys) ligase from Methanosarcina mazei (strain ATCC BAA-159 / DSM 3647 / Goe1 / Go1 / JCM 11833 / OCM 88) (Methanosarcina frisia).